The chain runs to 109 residues: Anther-specific protein MZm3-3 (109 aa).

The N-terminal stretch at 1-41 (MTATTTTAAGGGKVQPRGLPVALSLLLLLVLAAGLGGGAEA) is a signal peptide. Cystine bridges form between Cys45–Cys86, Cys55–Cys75, Cys76–Cys101, and Cys88–Cys108.

The protein belongs to the A9/FIL1 family. As to expression, tapetum of anthers.

It is found in the secreted. In Zea mays (Maize), this protein is Anther-specific protein MZm3-3.